The following is a 163-amino-acid chain: Phosphopantetheine adenylyltransferase (163 aa).

T11 is a substrate binding site. ATP contacts are provided by residues 11-12 and H19; that span reads TF. K43, L75, and R89 together coordinate substrate. ATP-binding positions include 90–92, E100, and 125–131; these read GLR and YMFISAT.

This sequence belongs to the bacterial CoaD family. As to quaternary structure, homohexamer. It depends on Mg(2+) as a cofactor.

Its subcellular location is the cytoplasm. It catalyses the reaction (R)-4'-phosphopantetheine + ATP + H(+) = 3'-dephospho-CoA + diphosphate. It functions in the pathway cofactor biosynthesis; coenzyme A biosynthesis; CoA from (R)-pantothenate: step 4/5. Its function is as follows. Reversibly transfers an adenylyl group from ATP to 4'-phosphopantetheine, yielding dephospho-CoA (dPCoA) and pyrophosphate. The sequence is that of Phosphopantetheine adenylyltransferase from Aromatoleum aromaticum (strain DSM 19018 / LMG 30748 / EbN1) (Azoarcus sp. (strain EbN1)).